We begin with the raw amino-acid sequence, 679 residues long: Mitotic interactor and substrate of PLK1 (679 aa).

Residue Ser78 is modified to Phosphoserine; by CDK1; in vitro. Disordered regions lie at residues 151–182 (AVRK…TPLE) and 206–245 (ANKG…GHVV). Over residues 153–163 (RKSSTVATLQG) the composition is skewed to polar residues. A Phosphoserine modification is found at Ser156. Thr164 and Thr172 each carry phosphothreonine; by CDK1; in vitro. The residue at position 179 (Thr179) is a Phosphothreonine. Ser214 carries the post-translational modification Phosphoserine; by CDK1; in vitro. Thr219 is modified (phosphothreonine). Thr224 is subject to Phosphothreonine; by CDK1; in vitro. Ser284 bears the Phosphoserine; by CDK1; in vitro mark. Position 287 is a phosphothreonine; by CDK1; in vitro (Thr287). Ser348 carries the phosphoserine modification. Residues 360-371 (QREEDHRREGLH) show a composition bias toward basic and acidic residues. The interval 360–419 (QREEDHRREGLHVGRASTPDWVSEGPQPGLRRALSSDSILSPAPDARAADPAPEVRKVNR) is disordered. Phosphothreonine; by CDK1; in vitro is present on Thr377. Position 382 is a phosphoserine; by CDK1; in vitro (Ser382). Phosphoserine; by PLK1; in vitro is present on residues Ser394, Ser395, and Ser397. The residue at position 400 (Ser400) is a Phosphoserine. The segment covering 401–411 (PAPDARAADPA) has biased composition (low complexity). Residue Ser430 is modified to Phosphoserine. Residues 447-494 (PSSLSTAEAKAATSPKATMSPRHLSESSGKPLSTKQEASKPPRGCPQA) form a disordered region. Ser471 is subject to Phosphoserine; by PLK1; in vitro. A compositionally biased stretch (polar residues) spans 472 to 482 (ESSGKPLSTKQ). Residues Ser541 and Ser543 each carry the phosphoserine modification. Residues 545-569 (DLLERERESVLRREQEVAEERRNAL) adopt a coiled-coil conformation. A compositionally biased stretch (basic and acidic residues) spans 557–567 (REQEVAEERRN). Disordered regions lie at residues 557-598 (REQE…ITGS) and 622-643 (DPVD…GINP). Position 575 is a phosphoserine; by CDK1; in vitro (Ser575). Thr577 bears the Phosphothreonine mark. Ser582 and Ser586 each carry phosphoserine; by PLK1; in vitro. The span at 583–593 (DQNSRSSSQAS) shows a compositional bias: low complexity. Ser675 is subject to Phosphoserine.

The protein belongs to the MISP family. As to quaternary structure, associates with F-actin. Interacts with DCTN1; this interaction regulates DCTN1 distribution at the cell cortex. Interacts with PTK2/FAK and MAPRE1. Post-translationally, phosphorylated by CDK1 and PLK1. CDK1 is the priming kinase for PLK1 phosphorylation. Phosphorylation by PLK1 is required for proper spindle orientation at metaphase.

The protein localises to the cell junction. It localises to the focal adhesion. It is found in the cytoplasm. The protein resides in the cytoskeleton. Its subcellular location is the cell cortex. Its function is as follows. Plays a role in mitotic spindle orientation and mitotic progression. Regulates the distribution of dynactin at the cell cortex in a PLK1-dependent manner, thus stabilizing cortical and astral microtubule attachments required for proper mitotic spindle positioning. May link microtubules to the actin cytospkeleton and focal adhesions. May be required for directed cell migration and centrosome orientation. May also be necessary for proper stacking of the Golgi apparatus. The protein is Mitotic interactor and substrate of PLK1 of Homo sapiens (Human).